The following is a 1161-amino-acid chain: Cell wall protein DAN4 (1161 aa).

Residues 1–19 (MVNISIVAGIVALATSAAA) form the signal peptide. Disordered stretches follow at residues 123-309 (TSTS…SASS), 326-345 (TPATSTASTDHTTSSVSTTN), 354-547 (TTTS…SSFG), and 691-713 (STDSVSPNIPFSEISSSPESSTA). The interval 134–286 (TSTTPTTTIT…TTSTTSTTST (153 aa)) is 46 X 3 AA tandem repeats of T-[SP]-T. Over residues 354–372 (TTTSDTYISSSSPSQVTSS) the composition is skewed to low complexity. 14 consecutive repeat copies span residues 373 to 384 (AEPTTVSEVTSS), 385 to 396 (VEPTRSSQVTSS), 397 to 408 (AEPTTVSEFTSS), 409 to 420 (VEPTRSSQVTSS), 421 to 432 (AEPTTVSEFTSS), 433 to 444 (VEPTRSSQVTSS), 445 to 456 (AEPTTVSEFTSS), 457 to 468 (VEPTRSSQVTSS), 469 to 480 (AEPTTVSEFTSS), 481 to 492 (VEPTRSSQVTSS), 493 to 504 (AEPTTVSEFTSS), 505 to 516 (VEPIRSSQVTSS), 517 to 528 (AEPTTVSEVTSS), and 529 to 540 (VEPIRSSQVTTT). Residues 373 to 540 (AEPTTVSEVT…PIRSSQVTTT (168 aa)) form a 14 X 12 AA approximate tandem repeats region. Residues 373 to 547 (AEPTTVSEVT…TTTEPVSSFG (175 aa)) show a composition bias toward polar residues. 2 repeat units span residues 826–913 (EDSV…EDNE) and 914–1001 (EDIT…EDNE). Residues 826 to 1040 (EDSVLTKTQV…SPVSSFNSKA (215 aa)) are 2.5 X 88 AA approximate tandem repeats. A 2-3; truncated repeat occupies 1002–1040 (EDVASTKTELLTMETTITSCSGGICTTLMSPVSSFNSKA). Residue asparagine 1137 is the site of GPI-anchor amidated asparagine attachment. Positions 1138-1161 (GAYNFDKDNIFGTAIVAVVALLLL) are cleaved as a propeptide — removed in mature form.

It belongs to the SRP1/TIP1 family. Extensively O-glycosylated. Post-translationally, the GPI-anchor is attached to the protein in the endoplasmic reticulum and serves to target the protein to the cell surface. There, the glucosamine-inositol phospholipid moiety is cleaved off and the GPI-modified mannoprotein is covalently attached via its lipidless GPI glycan remnant to the 1,6-beta-glucan of the outer cell wall layer.

Its subcellular location is the secreted. The protein localises to the cell wall. The protein resides in the cell membrane. Component of the cell wall. In Saccharomyces cerevisiae (strain ATCC 204508 / S288c) (Baker's yeast), this protein is Cell wall protein DAN4.